The following is a 254-amino-acid chain: Phosphoribosylaminoimidazole-succinocarboxamide synthase (254 aa).

Belongs to the SAICAR synthetase family.

It catalyses the reaction 5-amino-1-(5-phospho-D-ribosyl)imidazole-4-carboxylate + L-aspartate + ATP = (2S)-2-[5-amino-1-(5-phospho-beta-D-ribosyl)imidazole-4-carboxamido]succinate + ADP + phosphate + 2 H(+). It participates in purine metabolism; IMP biosynthesis via de novo pathway; 5-amino-1-(5-phospho-D-ribosyl)imidazole-4-carboxamide from 5-amino-1-(5-phospho-D-ribosyl)imidazole-4-carboxylate: step 1/2. The protein is Phosphoribosylaminoimidazole-succinocarboxamide synthase of Bartonella tribocorum (strain CIP 105476 / IBS 506).